Here is a 281-residue protein sequence, read N- to C-terminus: Small ribosomal subunit protein uS2 (281 aa).

A disordered region spans residues 229-281; that stretch reads RSGANKTEGEAAEQPMAAWEKELLTNEAPAEASAEAAAPAAAEGETAEAPKAE. The span at 255-275 shows a compositional bias: low complexity; the sequence is EAPAEASAEAAAPAAAEGETA.

This sequence belongs to the universal ribosomal protein uS2 family.

This Bifidobacterium longum subsp. infantis (strain ATCC 15697 / DSM 20088 / JCM 1222 / NCTC 11817 / S12) protein is Small ribosomal subunit protein uS2.